A 57-amino-acid chain; its full sequence is COP9 signalosome complex subunit 9 (57 aa).

Thr-26 bears the Phosphothreonine mark.

The protein belongs to the CSN9 family. As to quaternary structure, component of the CSN complex, composed of COPS1/GPS1, COPS2, COPS3, COPS4, COPS5, COPS6, COPS7 (COPS7A or COPS7B), COPS8 and COPS9. In the complex, it interacts directly with COPS3, COPS5 and COPS6.

It is found in the nucleus. The protein resides in the cytoplasm. It localises to the nucleoplasm. In terms of biological role, component of the COP9 signalosome complex (CSN), a complex involved in various cellular and developmental processes. The CSN complex is an essential regulator of the ubiquitin (Ubl) conjugation pathway by mediating the deneddylation of the cullin subunits of SCF-type E3 ligase complexes, leading to decrease the Ubl ligase activity of SCF-type complexes such as SCF, CSA or DDB2. The complex is also involved in phosphorylation of p53/TP53, c-jun/JUN, IkappaBalpha/NFKBIA, ITPK1 and IRF8/ICSBP, possibly via its association with CK2 and PKD kinases. CSN-dependent phosphorylation of TP53 and JUN promotes and protects degradation by the Ubl system, respectively. Plays a role in cell proliferation. The protein is COP9 signalosome complex subunit 9 of Bos taurus (Bovine).